We begin with the raw amino-acid sequence, 345 residues long: S-adenosylmethionine:tRNA ribosyltransferase-isomerase (345 aa).

It belongs to the QueA family. Monomer.

It localises to the cytoplasm. It catalyses the reaction 7-aminomethyl-7-carbaguanosine(34) in tRNA + S-adenosyl-L-methionine = epoxyqueuosine(34) in tRNA + adenine + L-methionine + 2 H(+). The protein operates within tRNA modification; tRNA-queuosine biosynthesis. Transfers and isomerizes the ribose moiety from AdoMet to the 7-aminomethyl group of 7-deazaguanine (preQ1-tRNA) to give epoxyqueuosine (oQ-tRNA). This chain is S-adenosylmethionine:tRNA ribosyltransferase-isomerase, found in Helicobacter pylori (strain ATCC 700392 / 26695) (Campylobacter pylori).